A 355-amino-acid polypeptide reads, in one-letter code: uncharacterized protein (355 aa).

Cys-2 serves as the catalytic For GATase activity. The region spanning 2–248 (CELLGICFNK…NGELMVFKNG (247 aa)) is the Glutamine amidotransferase type-2 domain.

This is an uncharacterized protein from Methanocaldococcus jannaschii (strain ATCC 43067 / DSM 2661 / JAL-1 / JCM 10045 / NBRC 100440) (Methanococcus jannaschii).